A 69-amino-acid polypeptide reads, in one-letter code: Guanine nucleotide-binding protein G(I)/G(S)/G(O) subunit gamma-T2 (69 aa).

The segment at 47-69 (DPLLKGIPEDKNPFKEKGGCMIS) is disordered. Residues 53–69 (IPEDKNPFKEKGGCMIS) show a composition bias toward basic and acidic residues. Cysteine 66 carries the post-translational modification Cysteine methyl ester. A lipid anchor (S-farnesyl cysteine) is attached at cysteine 66. Positions 67 to 69 (MIS) are cleaved as a propeptide — removed in mature form.

This sequence belongs to the G protein gamma family. In terms of assembly, g proteins are composed of 3 units, alpha, beta and gamma.

It localises to the cell membrane. Guanine nucleotide-binding proteins (G proteins) are involved as a modulator or transducer in various transmembrane signaling systems. The beta and gamma chains are required for the GTPase activity, for replacement of GDP by GTP, and for G protein-effector interaction. The protein is Guanine nucleotide-binding protein G(I)/G(S)/G(O) subunit gamma-T2 (GNGT2) of Canis lupus familiaris (Dog).